A 69-amino-acid chain; its full sequence is Alpha-conotoxin Mr1.7a (69 aa).

The first 21 residues, 1–21 (MGMRMMFTVFLLVVLATTVVS), serve as a signal peptide directing secretion. Residues 22–49 (FTSNRVLDPAFRRRNAAAKASDLIALNA) constitute a propeptide that is removed on maturation. Residues proline 52 and proline 58 each carry the 4-hydroxyproline; in Mr1.7b modification. Cystine bridges form between cysteine 54/cysteine 60 and cysteine 55/cysteine 68. Residues 56-58 (THP) form a lacks the Ser-Xaa-Pro motif that is crucial for potent interaction with nAChR region. Cysteine 68 is modified (cysteine amide).

It belongs to the conotoxin A superfamily. In terms of processing, two 4-hydroxyprolines have been detected by MS but the assignment of which of the three prolines is modified is uncertain. Expressed by the venom duct.

Its subcellular location is the secreted. Acts as a co-agonist with PNU (an alpha-7 nAChR-selective allosteric modulator) at the endogenous alpha-7/CHRNA7 nicotinic acetylcholine receptors (nAChR) when tested in human SH-SY5Y neuroblastoma cells. Is the third alpha-conotoxin that acts as an agonist (after alpha-conotoxin SrIA/SrIB). Also acts as an antagonist at human alpha-7 nAChRs heterologously expressed in Xenopus oocytes. Has possibly a distinct nAChR binding mode from other alpha-conotoxins, due to a different three residue motif (lacks the Ser-Xaa-Pro motif). Its function is as follows. Acts as a weak partial agonist at alpha-7/CHRNA7 nicotinic acetylcholine receptors (nAChR) when tested in human SH-SY5Y neuroblastoma cells. Has possibly a distinct nAChR binding mode from other alpha-conotoxins, due to a different three residue motif (lacks the Ser-Xaa-Pro motif). The polypeptide is Alpha-conotoxin Mr1.7a (Conus marmoreus (Marble cone)).